The primary structure comprises 291 residues: Verruculogen synthase (291 aa).

Residue Y68 is part of the active site.

Belongs to the PhyH family. Homodimer. Fe cation is required as a cofactor.

It carries out the reaction fumitremorgin B + 2-oxoglutarate + AH2 + 2 O2 = verruculogen + succinate + A + CO2 + H2O. The protein operates within mycotoxin biosynthesis. In terms of biological role, verruculogen synthase; part of the gene cluster that mediates the biosynthesis of fumitremorgins, indole alkaloids that carry not only intriguing chemical structures, but also interesting biological and pharmacological activities. The biosynthesis of fumitremorgin-type alkaloids begins by condensation of the two amino acids L-tryptophan and L-proline to brevianamide F, catalyzed by the non-ribosomal peptide synthetase ftmA. Brevianamide F is then prenylated by the prenyltransferase ftmPT1/ftmB in the presence of dimethylallyl diphosphate, resulting in the formation of tryprostatin B. The three cytochrome P450 monooxygenases, ftmP450-1/ftmC, ftmP450-2/ftmE and ftmP450-3/FtmG, are responsible for the conversion of tryprostatin B to 6-hydroxytryprostatin B, tryprostatin A to fumitremorgin C and fumitremorgin C to 12,13-dihydroxyfumitremorgin C, respectively. The putative methyltransferase ftmMT/ftmD is expected for the conversion of 6-hydroxytryprostatin B to tryprostatin A. FtmPT2/FtmH catalyzes the prenylation of 12,13-dihydroxyfumitre-morgin C in the presence of dimethylallyl diphosphate, resulting in the formation of fumitremorgin B. Fumitremorgin B is further converted to verruculogen by ftmOx1/ftmF via the insertion of an endoperoxide bond between the two prenyl moieties. In some fungal species, verruculogen is further converted to fumitremorgin A, but the enzymes involved in this step have not been identified yet. In Aspergillus fumigatus (Neosartorya fumigata), this protein is Verruculogen synthase.